Here is a 184-residue protein sequence, read N- to C-terminus: GTP-dependent dephospho-CoA kinase (184 aa).

GTP contacts are provided by Asp-33, Val-34, Asp-52, Lys-54, and Glu-103.

Belongs to the GTP-dependent DPCK family.

The catalysed reaction is 3'-dephospho-CoA + GTP = GDP + CoA + H(+). The protein operates within cofactor biosynthesis; coenzyme A biosynthesis. Functionally, catalyzes the GTP-dependent phosphorylation of the 3'-hydroxyl group of dephosphocoenzyme A to form coenzyme A (CoA). This is GTP-dependent dephospho-CoA kinase from Ignicoccus hospitalis (strain KIN4/I / DSM 18386 / JCM 14125).